The primary structure comprises 515 residues: Protein disulfide-isomerase (515 aa).

An N-terminal signal peptide occupies residues Met1–Ala22. Thioredoxin domains lie at Glu23 to Gly139 and Phe351 to Gln480. Residues Cys58, Cys61, Cys402, and Cys405 each act as nucleophile in the active site. Disulfide bonds link Cys58-Cys61 and Cys402-Cys405. The tract at residues Ser477–Leu515 is disordered. The segment covering Ala484 to Glu507 has biased composition (acidic residues). A Prevents secretion from ER motif is present at residues Lys512 to Leu515.

Belongs to the protein disulfide isomerase family. Heterodimer; heterodimerizes with the protein microsomal triglyceride transfer MTTP. Homodimer. Monomers and homotetramers may also occur. Also constitutes the structural subunit of prolyl 4-hydroxylase. Stabilizes this enzyme and retains it in the ER without contributing to the catalytic activity. Binds UBQLN1.

It is found in the endoplasmic reticulum. The protein localises to the endoplasmic reticulum lumen. The protein resides in the cell membrane. The enzyme catalyses Catalyzes the rearrangement of -S-S- bonds in proteins.. Its function is as follows. This multifunctional protein catalyzes the formation, breakage and rearrangement of disulfide bonds. At the cell surface, seems to act as a reductase that cleaves disulfide bonds of proteins attached to the cell. May therefore cause structural modifications of exofacial proteins. Inside the cell, seems to form/rearrange disulfide bonds of nascent proteins. At high concentrations, functions as a chaperone that inhibits aggregation of misfolded proteins. At low concentrations, facilitates aggregation (anti-chaperone activity). Also acts a structural subunit of various enzymes such as prolyl 4-hydroxylase. In Gallus gallus (Chicken), this protein is Protein disulfide-isomerase (P4HB).